A 725-amino-acid polypeptide reads, in one-letter code: Catalase-peroxidase (725 aa).

Polar residues-rich tracts occupy residues 1-12 and 23-32; these read MSTSNDPSNNAS and PKQSAGSGTA. The first 20 residues, 1-20, serve as a signal peptide directing secretion; sequence MSTSNDPSNNASAGKCPFHA. The tract at residues 1 to 35 is disordered; sequence MSTSNDPSNNASAGKCPFHAETPKQSAGSGTANRD. A cross-link (tryptophyl-tyrosyl-methioninium (Trp-Tyr) (with M-252)) is located at residues 105 to 226; it reads WHGAGTYRTV…IGATEMGLIY (122 aa). H106 acts as the Proton acceptor in catalysis. A cross-link (tryptophyl-tyrosyl-methioninium (Tyr-Met) (with W-105)) is located at residues 226-252; that stretch reads YVNPEGPNASGEPLSAAAAIRATFGNM. A heme b-binding site is contributed by H267.

This sequence belongs to the peroxidase family. Peroxidase/catalase subfamily. Homodimer or homotetramer. Heme b serves as cofactor. Formation of the three residue Trp-Tyr-Met cross-link is important for the catalase, but not the peroxidase activity of the enzyme.

The catalysed reaction is H2O2 + AH2 = A + 2 H2O. It carries out the reaction 2 H2O2 = O2 + 2 H2O. In terms of biological role, bifunctional enzyme with both catalase and broad-spectrum peroxidase activity. The protein is Catalase-peroxidase of Klebsiella pneumoniae subsp. pneumoniae (strain ATCC 700721 / MGH 78578).